Reading from the N-terminus, the 300-residue chain is Very-long-chain enoyl-CoA reductase (300 aa).

The chain crosses the membrane as a helical span at residues 91-111; it reads SLVFICEYAGPLFVYPIFYFL. The N-linked (GlcNAc...) asparagine glycan is linked to Asn-163. A helical transmembrane segment spans residues 191–211; that stretch reads VYLGLGLWIIGEVFNYICHIQ. Asn-238 carries an N-linked (GlcNAc...) asparagine glycan. A helical membrane pass occupies residues 243–263; the sequence is ILSWIGFSILTQTLTSWIFAL.

This sequence belongs to the steroid 5-alpha reductase family.

Its subcellular location is the endoplasmic reticulum membrane. It carries out the reaction a very-long-chain 2,3-saturated fatty acyl-CoA + NADP(+) = a very-long-chain (2E)-enoyl-CoA + NADPH + H(+). It functions in the pathway lipid metabolism; fatty acid biosynthesis. Catalyzes the last of the four reactions of the long-chain fatty acids elongation cycle. This endoplasmic reticulum-bound enzymatic process, allows the addition of 2 carbons to the chain of long- and very long-chain fatty acids/VLCFAs per cycle. This enzyme reduces the trans-2,3-enoyl-CoA fatty acid intermediate to an acyl-CoA that can be further elongated by entering a new cycle of elongation. Thereby, it participates in the production of VLCFAs of different chain lengths that are involved in multiple biological processes as precursors of membrane lipids and lipid mediators. The chain is Very-long-chain enoyl-CoA reductase (gpsn2) from Dictyostelium discoideum (Social amoeba).